We begin with the raw amino-acid sequence, 470 residues long: 3-isopropylmalate dehydratase large subunit (470 aa).

3 residues coordinate [4Fe-4S] cluster: Cys-349, Cys-410, and Cys-413.

This sequence belongs to the aconitase/IPM isomerase family. LeuC type 1 subfamily. As to quaternary structure, heterodimer of LeuC and LeuD. [4Fe-4S] cluster is required as a cofactor.

The enzyme catalyses (2R,3S)-3-isopropylmalate = (2S)-2-isopropylmalate. Its pathway is amino-acid biosynthesis; L-leucine biosynthesis; L-leucine from 3-methyl-2-oxobutanoate: step 2/4. Functionally, catalyzes the isomerization between 2-isopropylmalate and 3-isopropylmalate, via the formation of 2-isopropylmaleate. The sequence is that of 3-isopropylmalate dehydratase large subunit from Nitrosomonas europaea (strain ATCC 19718 / CIP 103999 / KCTC 2705 / NBRC 14298).